Consider the following 197-residue polypeptide: Na(+)-translocating NADH-quinone reductase subunit E (197 aa).

6 helical membrane-spanning segments follow: residues 11-31 (SVFI…FLAV), 35-55 (VSTA…SVPA), 76-96 (FLKF…LEMF), 108-128 (LGIY…VSFM), 139-159 (VVYG…LAGI), and 175-195 (LGIT…FSGI).

It belongs to the NqrDE/RnfAE family. In terms of assembly, composed of six subunits; NqrA, NqrB, NqrC, NqrD, NqrE and NqrF.

Its subcellular location is the cell inner membrane. It catalyses the reaction a ubiquinone + n Na(+)(in) + NADH + H(+) = a ubiquinol + n Na(+)(out) + NAD(+). Functionally, NQR complex catalyzes the reduction of ubiquinone-1 to ubiquinol by two successive reactions, coupled with the transport of Na(+) ions from the cytoplasm to the periplasm. NqrA to NqrE are probably involved in the second step, the conversion of ubisemiquinone to ubiquinol. This chain is Na(+)-translocating NADH-quinone reductase subunit E, found in Neisseria meningitidis serogroup A / serotype 4A (strain DSM 15465 / Z2491).